The following is a 201-amino-acid chain: Recombination protein RecR (201 aa).

The C4-type zinc-finger motif lies at 60–75 (CKKCFNLTSEDECEIC). The region spanning 83–177 (KLICVVAETK…KVTRIAYGLP (95 aa)) is the Toprim domain.

Belongs to the RecR family.

May play a role in DNA repair. It seems to be involved in an RecBC-independent recombinational process of DNA repair. It may act with RecF and RecO. This chain is Recombination protein RecR, found in Prochlorococcus marinus (strain MIT 9215).